The sequence spans 625 residues: tRNA uridine 5-carboxymethylaminomethyl modification enzyme MnmG (625 aa).

FAD-binding positions include 13–18 (GGGHAG), Val125, and Ser182. Residue 276-290 (GPRYCPSIEDKITRF) coordinates NAD(+). An FAD-binding site is contributed by Gln373.

Belongs to the MnmG family. As to quaternary structure, homodimer. Heterotetramer of two MnmE and two MnmG subunits. Requires FAD as cofactor.

The protein resides in the cytoplasm. Functionally, NAD-binding protein involved in the addition of a carboxymethylaminomethyl (cmnm) group at the wobble position (U34) of certain tRNAs, forming tRNA-cmnm(5)s(2)U34. The polypeptide is tRNA uridine 5-carboxymethylaminomethyl modification enzyme MnmG (Lactococcus lactis subsp. lactis (strain IL1403) (Streptococcus lactis)).